Reading from the N-terminus, the 368-residue chain is Histidinol dehydrogenase (368 aa).

Positions 197, 218, and 221 each coordinate substrate. Residues Gln-218 and His-221 each contribute to the Zn(2+) site. Active-site proton acceptor residues include Glu-276 and His-277. The substrate site is built by His-277, Asp-306, Glu-358, and His-363. Asp-306 lines the Zn(2+) pocket. His-363 contributes to the Zn(2+) binding site.

It belongs to the histidinol dehydrogenase family. The cofactor is Zn(2+).

It catalyses the reaction L-histidinol + 2 NAD(+) + H2O = L-histidine + 2 NADH + 3 H(+). It participates in amino-acid biosynthesis; L-histidine biosynthesis; L-histidine from 5-phospho-alpha-D-ribose 1-diphosphate: step 9/9. Catalyzes the sequential NAD-dependent oxidations of L-histidinol to L-histidinaldehyde and then to L-histidine. The sequence is that of Histidinol dehydrogenase from Pyrobaculum aerophilum (strain ATCC 51768 / DSM 7523 / JCM 9630 / CIP 104966 / NBRC 100827 / IM2).